A 467-amino-acid polypeptide reads, in one-letter code: Serine/threonine-protein kinase AFC1 (467 aa).

Residues 115-443 (YQILSKMGEG…AREALNHPFF (329 aa)) enclose the Protein kinase domain. ATP-binding positions include 121–129 (MGEGTFGQV) and K144. The active-site Proton acceptor is D240. Residues 447-467 (REQSIPPFNPNPHPFLYNQKN) are disordered.

This sequence belongs to the protein kinase superfamily. CMGC Ser/Thr protein kinase family. Lammer subfamily.

It catalyses the reaction L-seryl-[protein] + ATP = O-phospho-L-seryl-[protein] + ADP + H(+). The enzyme catalyses L-threonyl-[protein] + ATP = O-phospho-L-threonyl-[protein] + ADP + H(+). It carries out the reaction L-tyrosyl-[protein] + ATP = O-phospho-L-tyrosyl-[protein] + ADP + H(+). In terms of biological role, activator of yeast transcription factor, STE12. This is Serine/threonine-protein kinase AFC1 (AFC1) from Arabidopsis thaliana (Mouse-ear cress).